The primary structure comprises 487 residues: 6-phosphogluconate dehydrogenase, decarboxylating 1, chloroplastic (487 aa).

Residue Met-1 is modified to N-acetylmethionine. NADP(+) contacts are provided by residues 13-18 (GLAVMG), 36-38 (NRT), 80-82 (VKA), and Asn-108. Substrate is bound by residues Asn-108 and 134 to 136 (SGG). Lys-188 acts as the Proton acceptor in catalysis. Substrate is bound at residue 191-192 (HN). The active-site Proton donor is the Glu-195. Residues Tyr-196, Lys-266, Arg-293, Arg-458, and His-464 each coordinate substrate.

Belongs to the 6-phosphogluconate dehydrogenase family. In terms of assembly, forms homodimer. Forms heterodimers with PGD2 or PGD3.

Its subcellular location is the plastid. It localises to the chloroplast. It is found in the cytoplasm. The protein resides in the cytosol. The catalysed reaction is 6-phospho-D-gluconate + NADP(+) = D-ribulose 5-phosphate + CO2 + NADPH. The protein operates within carbohydrate degradation; pentose phosphate pathway; D-ribulose 5-phosphate from D-glucose 6-phosphate (oxidative stage): step 3/3. Catalyzes the oxidative decarboxylation of 6-phosphogluconate to ribulose 5-phosphate and CO(2), with concomitant reduction of NADP to NADPH. This chain is 6-phosphogluconate dehydrogenase, decarboxylating 1, chloroplastic, found in Arabidopsis thaliana (Mouse-ear cress).